A 415-amino-acid chain; its full sequence is L-cysteine:1D-myo-inositol 2-amino-2-deoxy-alpha-D-glucopyranoside ligase (415 aa).

A Zn(2+)-binding site is contributed by cysteine 43. L-cysteinyl-5'-AMP-binding positions include 43–46, threonine 58, and 81–83; these read CGIT and NVT. The short motif at 45–55 is the 'HIGH' region element; it reads ITPYDATHLGH. Positions 188–193 match the 'ERGGDP' region motif; sequence ERGGDP. Position 229 (tryptophan 229) interacts with L-cysteinyl-5'-AMP. Cysteine 233 contributes to the Zn(2+) binding site. 251 to 253 provides a ligand contact to L-cysteinyl-5'-AMP; that stretch reads GSD. Histidine 258 serves as a coordination point for Zn(2+). Residue valine 285 coordinates L-cysteinyl-5'-AMP. A 'KMSKS' region motif is present at residues 291–295; sequence KMSKS.

This sequence belongs to the class-I aminoacyl-tRNA synthetase family. MshC subfamily. Monomer. Zn(2+) serves as cofactor.

It carries out the reaction 1D-myo-inositol 2-amino-2-deoxy-alpha-D-glucopyranoside + L-cysteine + ATP = 1D-myo-inositol 2-(L-cysteinylamino)-2-deoxy-alpha-D-glucopyranoside + AMP + diphosphate + H(+). Catalyzes the ATP-dependent condensation of GlcN-Ins and L-cysteine to form L-Cys-GlcN-Ins. The chain is L-cysteine:1D-myo-inositol 2-amino-2-deoxy-alpha-D-glucopyranoside ligase from Cellulomonas flavigena (strain ATCC 482 / DSM 20109 / BCRC 11376 / JCM 18109 / NBRC 3775 / NCIMB 8073 / NRS 134).